Consider the following 312-residue polypeptide: GTP cyclohydrolase MptA (312 aa).

This sequence belongs to the GTP cyclohydrolase IV family. In terms of assembly, homodimer. The cofactor is Fe(2+).

The enzyme catalyses GTP + H2O = 7,8-dihydroneopterin 2',3'-cyclic phosphate + formate + diphosphate + H(+). The protein operates within cofactor biosynthesis; 5,6,7,8-tetrahydromethanopterin biosynthesis. Its function is as follows. Converts GTP to 7,8-dihydro-D-neopterin 2',3'-cyclic phosphate, the first intermediate in the biosynthesis of coenzyme methanopterin. The chain is GTP cyclohydrolase MptA from Methanococcus vannielii (strain ATCC 35089 / DSM 1224 / JCM 13029 / OCM 148 / SB).